Here is a 238-residue protein sequence, read N- to C-terminus: MNKNIIIKSIAALTILTSVTGVGTTVVEGIQQTAKAEHNVKLIKNTNVAPYNGVVSIGSGTGFIVGKNTIVTNKHVVAGMEIGAHIIAHPNGEYNNGGFYKVKKIVRYSGQEDIAILHVEDKAVHPKNRNFKDYTGILKIASEAKENERISIVGYPEPYINKFQMYESTGKVLSVKGNMIITDAFVEPGNSGSAVFNSKYEVVGVHFGGNGPGNKSTKGYGVYFSPEIKKFIADNTDK.

The first 36 residues, 1–36, serve as a signal peptide directing secretion; it reads MNKNIIIKSIAALTILTSVTGVGTTVVEGIQQTAKA. Catalysis depends on charge relay system residues H75, D113, and S191.

This sequence belongs to the peptidase S1B family.

Its subcellular location is the secreted. The protein is Serine protease SplE (splE) of Staphylococcus aureus (strain USA300).